A 370-amino-acid polypeptide reads, in one-letter code: L-lactate oxidase (370 aa).

Residues 8-367 form the FMN hydroxy acid dehydrogenase domain; that stretch reads DPDGMPVTLS…TPDLLTGFSG (360 aa). Y34 provides a ligand contact to pyruvate. FMN is bound by residues 87–89, S116, and Q136; that span reads PMA. Y138 is a pyruvate binding site. T164 contacts FMN. R173 serves as a coordination point for pyruvate. K238 and S260 together coordinate FMN. Pyruvate contacts are provided by H262 and R265. The active-site Proton acceptor is H262. Residues 293–297 and R317 each bind FMN; that span reads DGGIR.

This sequence belongs to the FMN-dependent alpha-hydroxy acid dehydrogenase family. In terms of assembly, homotetramer. The cofactor is FMN.

It catalyses the reaction (S)-lactate + O2 = pyruvate + H2O2. The catalysed reaction is a (2S)-2-hydroxycarboxylate + O2 = a 2-oxocarboxylate + H2O2. The enzyme catalyses glycolate + O2 = glyoxylate + H2O2. It carries out the reaction 2-hydroxyoctadecanoate + O2 = 2-oxooctadecanoate + H2O2. Catalyzes the oxidation of (S)-lactate (L-lactate) to pyruvate, with a reduction of O2 to H2O2. Is also able to use glycolate and to a lesser extent 2-hydroxyoctadecanoate as substrate. This Roseobacter sp. (strain GAI101) protein is L-lactate oxidase.